The chain runs to 66 residues: MKPNIHPDYGPARIICACGNVIETRSTKKDIRVEICSQCHPFYTGSRQRVVERGGRIERFRQKYGR.

Zn(2+)-binding residues include Cys16, Cys18, Cys36, and Cys39.

This sequence belongs to the bacterial ribosomal protein bL31 family. Type A subfamily. As to quaternary structure, part of the 50S ribosomal subunit. It depends on Zn(2+) as a cofactor.

Functionally, binds the 23S rRNA. The sequence is that of Large ribosomal subunit protein bL31 from Moorella thermoacetica (strain ATCC 39073 / JCM 9320).